We begin with the raw amino-acid sequence, 223 residues long: Ribosome maturation factor RimM (223 aa).

One can recognise a PRC barrel domain in the interval alanine 142–tyrosine 223.

Belongs to the RimM family. Binds ribosomal protein uS19.

The protein resides in the cytoplasm. An accessory protein needed during the final step in the assembly of 30S ribosomal subunit, possibly for assembly of the head region. Essential for efficient processing of 16S rRNA. May be needed both before and after RbfA during the maturation of 16S rRNA. It has affinity for free ribosomal 30S subunits but not for 70S ribosomes. This Burkholderia multivorans (strain ATCC 17616 / 249) protein is Ribosome maturation factor RimM.